Consider the following 200-residue polypeptide: Protein GrpE (200 aa).

The protein belongs to the GrpE family. Homodimer.

The protein resides in the cytoplasm. Participates actively in the response to hyperosmotic and heat shock by preventing the aggregation of stress-denatured proteins, in association with DnaK and GrpE. It is the nucleotide exchange factor for DnaK and may function as a thermosensor. Unfolded proteins bind initially to DnaJ; upon interaction with the DnaJ-bound protein, DnaK hydrolyzes its bound ATP, resulting in the formation of a stable complex. GrpE releases ADP from DnaK; ATP binding to DnaK triggers the release of the substrate protein, thus completing the reaction cycle. Several rounds of ATP-dependent interactions between DnaJ, DnaK and GrpE are required for fully efficient folding. The chain is Protein GrpE from Geobacter sulfurreducens (strain ATCC 51573 / DSM 12127 / PCA).